Reading from the N-terminus, the 436-residue chain is T-box transcription factor T (436 aa).

The T-box DNA-binding region spans 51–219; the sequence is LWLRFKELTN…YNPFAKAFLD (169 aa).

As to quaternary structure, monomer. Binds DNA as a monomer.

Its subcellular location is the nucleus. Functionally, involved in the transcriptional regulation of genes required for mesoderm formation and differentiation. Binds to a palindromic T site 5'-TTCACACCTAGGTGTGAA-3' DNA sequence and activates gene transcription when bound to such a site. The sequence is that of T-box transcription factor T from Mus musculus (Mouse).